The sequence spans 317 residues: Porphobilinogen deaminase (317 aa).

An S-(dipyrrolylmethanemethyl)cysteine modification is found at Cys245.

The protein belongs to the HMBS family. As to quaternary structure, monomer. It depends on dipyrromethane as a cofactor.

It catalyses the reaction 4 porphobilinogen + H2O = hydroxymethylbilane + 4 NH4(+). The protein operates within porphyrin-containing compound metabolism; protoporphyrin-IX biosynthesis; coproporphyrinogen-III from 5-aminolevulinate: step 2/4. Its pathway is porphyrin-containing compound metabolism; chlorophyll biosynthesis. In terms of biological role, tetrapolymerization of the monopyrrole PBG into the hydroxymethylbilane pre-uroporphyrinogen in several discrete steps. The chain is Porphobilinogen deaminase from Synechococcus sp. (strain RCC307).